Reading from the N-terminus, the 124-residue chain is UPF0299 membrane protein VIBHAR_02118 (124 aa).

A run of 4 helical transmembrane segments spans residues 6-26 (LLQL…LGIG), 35-55 (VSVP…TLGL), 72-92 (MILL…MLLA), and 95-115 (LPII…LAWF).

This sequence belongs to the UPF0299 family.

The protein resides in the cell inner membrane. The protein is UPF0299 membrane protein VIBHAR_02118 of Vibrio campbellii (strain ATCC BAA-1116).